The primary structure comprises 347 residues: GMP reductase (347 aa).

108–131 (ADFDKMKQILALSPSLKFICIDVA) provides a ligand contact to NADP(+). Residues Gly-181 and Gly-183 each coordinate K(+). Catalysis depends on Cys-186, which acts as the Thioimidate intermediate. 216–239 (IVSDGGCSVPGDVAKAFGGGADFV) is an NADP(+) binding site.

This sequence belongs to the IMPDH/GMPR family. GuaC type 1 subfamily. Homotetramer.

It catalyses the reaction IMP + NH4(+) + NADP(+) = GMP + NADPH + 2 H(+). In terms of biological role, catalyzes the irreversible NADPH-dependent deamination of GMP to IMP. It functions in the conversion of nucleobase, nucleoside and nucleotide derivatives of G to A nucleotides, and in maintaining the intracellular balance of A and G nucleotides. This is GMP reductase from Yersinia pestis bv. Antiqua (strain Antiqua).